The chain runs to 227 residues: MICOS complex subunit MIC19 (227 aa).

Glycine 2 is lipidated: N-myristoyl glycine. Phosphoserine is present on serine 29. A disordered region spans residues 34–60 (DRMKETSPSGPKSQRYSGTYGASVSDE). Residues 39–55 (TSPSGPKSQRYSGTYGA) are compositionally biased toward polar residues. Tyrosine 49 carries the post-translational modification Phosphotyrosine. Serine 50, serine 56, and serine 58 each carry phosphoserine. Lysine 142 bears the N6-acetyllysine mark. The CHCH domain occupies 180–222 (HPVCADLQAQILQCYRQNTQQTLSCSALASQYMRCVNQAKQST). 2 consecutive short sequence motifs (cx9C motif) follow at residues 183-193 (CADLQAQILQC) and 204-214 (CSALASQYMRC). 2 cysteine pairs are disulfide-bonded: cysteine 183–cysteine 214 and cysteine 193–cysteine 204.

This sequence belongs to the MICOS complex subunit Mic19 family. Metazoan Mic19 subfamily. Component of the mitochondrial contact site and cristae organizing system (MICOS) complex, composed of at least MICOS10/MIC10, CHCHD3/MIC19, CHCHD6/MIC25, APOOL/MIC27, IMMT/MIC60, APOO/MIC23/MIC26 and MICOS13/MIC13. This complex was also known under the names MINOS or MitOS complex. The MICOS complex associates with mitochondrial outer membrane proteins SAMM50, MTX1 and MTX2 (together described as components of the mitochondrial outer membrane sorting assembly machinery (SAM) complex) and DNAJC11, mitochondrial inner membrane protein TMEM11 and with HSPA9. The MICOS and SAM complexes together with DNAJC11 are part of a large protein complex spanning both membranes termed the mitochondrial intermembrane space bridging (MIB) complex. Interacts with HSPA1A/HSPA1B and OPA1, preferentially with the soluble OPA1 form. Interacts with IMMT/MIC60.

The protein localises to the mitochondrion inner membrane. The protein resides in the cytoplasm. It localises to the nucleus. Its subcellular location is the mitochondrion. Functionally, component of the MICOS complex, a large protein complex of the mitochondrial inner membrane that plays crucial roles in the maintenance of crista junctions, inner membrane architecture, and formation of contact sites to the outer membrane. Has also been shown to function as a transcription factor which binds to the BAG1 promoter and represses BAG1 transcription. Plays an important role in the maintenance of the MICOS complex stability and the mitochondrial cristae morphology. The protein is MICOS complex subunit MIC19 (CHCHD3) of Bos taurus (Bovine).